The primary structure comprises 670 residues: Transketolase, chromosomal (670 aa).

His32 contributes to the substrate binding site. Residues His72 and 120-122 contribute to the thiamine diphosphate site; that span reads GPL. Asp161 contacts Mg(2+). Gly162 and Asn191 together coordinate thiamine diphosphate. Mg(2+) is bound by residues Asn191 and Ile193. Residues His267, Arg364, and Ser391 each contribute to the substrate site. His267 provides a ligand contact to thiamine diphosphate. Glu417 (proton donor) is an active-site residue. Phe443 is a binding site for thiamine diphosphate. His467, Asp475, and Arg526 together coordinate substrate.

This sequence belongs to the transketolase family. Homodimer. The cofactor is Mg(2+). It depends on Ca(2+) as a cofactor. Mn(2+) serves as cofactor. Co(2+) is required as a cofactor. Requires thiamine diphosphate as cofactor.

The enzyme catalyses D-sedoheptulose 7-phosphate + D-glyceraldehyde 3-phosphate = aldehydo-D-ribose 5-phosphate + D-xylulose 5-phosphate. It functions in the pathway carbohydrate biosynthesis; Calvin cycle. In terms of biological role, catalyzes the transfer of a two-carbon ketol group from a ketose donor to an aldose acceptor, via a covalent intermediate with the cofactor thiamine pyrophosphate. This Cupriavidus necator (strain ATCC 17699 / DSM 428 / KCTC 22496 / NCIMB 10442 / H16 / Stanier 337) (Ralstonia eutropha) protein is Transketolase, chromosomal (cbbTC).